The chain runs to 750 residues: MIIRSPESEVKIMVDRDPIKTSFEEWARPGHFSRTIAKGPDTTTWIWNLHADAHDFDSHTSDLEEISRKVFSAHFGQLSIIFLWLSGMYFHGARFSNYEAWLSDPTHIGPSAQVVWPIVGQEILNGDVGGGFRGIQITSGFFQLWRASGITNELQLYCTAIGALVFAALMLFAGWFHYHKAAPKLAWFQDVESMLNHHLAGLLGLGSLSWAGHQVHVSLPINQFLDAGVDPKEIPLPHEFILNRDLLAQLYPSFAEGATPFFTLNWSKYADFLSFRGGLDPVTGGLWLTDIAHHHLAIAILFLVAGHMYKTNWGIGHSLKDILEAHKGPFTGQGHKGLYEILTTSWHAQLSLNLAMLGSSTIVVAHHMYSMPPYPYLAIDYGTQLSLFTHHMWIGGFLIVGAAAHAAIFMVRDYDPTTRYNDLLDRVLRHRDAIISHLNWACIFLGFHSFGLYIHNDTMSALGRPQDMFSDTAIQLQPIFAQWVQNTHALAPSATAPGATASTSLTWGGGDLVAVGGKVALLPIPLGTADFLVHHIHAFTIHVTVLILLKGVLFARSSRLIPDKANLGFRFPCDGPGRGGTCQVSAWDHVFLGLFWMYNAISVVIFHFSWKMQSDVWGSISDQGVVTHITGGNFAQSSITINGWLRDFLWAQASQVIQSYGSSLSAYGLFFLGAHFVWAFSLMFLFSGRGYWQELIESIVWAHNKLKVAPATQPRALSIVQGRAVGVTHYLLGGIATTWAFFLARIIAVG.

8 helical membrane passes run 70–93 (VFSAHFGQLSIIFLWLSGMYFHGA), 156–179 (LYCTAIGALVFAALMLFAGWFHYH), 195–219 (LNHHLAGLLGLGSLSWAGHQVHVSL), 291–309 (IAHHHLAIAILFLVAGHMY), 346–369 (WHAQLSLNLAMLGSSTIVVAHHMY), 385–411 (LSLFTHHMWIGGFLIVGAAAHAAIFMV), 433–455 (AIISHLNWACIFLGFHSFGLYIH), and 531–549 (FLVHHIHAFTIHVTVLILL). C573 and C582 together coordinate [4Fe-4S] cluster. The next 2 membrane-spanning stretches (helical) occupy residues 589–610 (HVFLGLFWMYNAISVVIFHFSW) and 664–686 (LSAYGLFFLGAHFVWAFSLMFLF). H675 contacts chlorophyll a'. Chlorophyll a-binding residues include M683 and Y691. Residue W692 coordinates phylloquinone. The chain crosses the membrane as a helical span at residues 724–744 (AVGVTHYLLGGIATTWAFFLA).

The protein belongs to the PsaA/PsaB family. The PsaA/B heterodimer binds the P700 chlorophyll special pair and subsequent electron acceptors. PSI consists of a core antenna complex that captures photons, and an electron transfer chain that converts photonic excitation into a charge separation. The eukaryotic PSI reaction center is composed of at least 11 subunits. Requires P700 is a chlorophyll a/chlorophyll a' dimer, A0 is one or more chlorophyll a, A1 is one or both phylloquinones and FX is a shared 4Fe-4S iron-sulfur center. as cofactor.

Its subcellular location is the plastid. It is found in the chloroplast thylakoid membrane. The catalysed reaction is reduced [plastocyanin] + hnu + oxidized [2Fe-2S]-[ferredoxin] = oxidized [plastocyanin] + reduced [2Fe-2S]-[ferredoxin]. PsaA and PsaB bind P700, the primary electron donor of photosystem I (PSI), as well as the electron acceptors A0, A1 and FX. PSI is a plastocyanin-ferredoxin oxidoreductase, converting photonic excitation into a charge separation, which transfers an electron from the donor P700 chlorophyll pair to the spectroscopically characterized acceptors A0, A1, FX, FA and FB in turn. Oxidized P700 is reduced on the lumenal side of the thylakoid membrane by plastocyanin. The protein is Photosystem I P700 chlorophyll a apoprotein A1 of Calycanthus floridus var. glaucus (Eastern sweetshrub).